The sequence spans 314 residues: Ferrochelatase (314 aa).

Fe cation contacts are provided by His188 and Glu269.

Belongs to the ferrochelatase family.

The protein resides in the cytoplasm. The enzyme catalyses heme b + 2 H(+) = protoporphyrin IX + Fe(2+). Its pathway is porphyrin-containing compound metabolism; protoheme biosynthesis; protoheme from protoporphyrin-IX: step 1/1. Catalyzes the ferrous insertion into protoporphyrin IX. This chain is Ferrochelatase, found in Campylobacter fetus subsp. fetus (strain 82-40).